We begin with the raw amino-acid sequence, 501 residues long: GMP synthase [glutamine-hydrolyzing] (501 aa).

One can recognise a Glutamine amidotransferase type-1 domain in the interval Met-1–Asn-185. The Nucleophile role is filled by Cys-75. Active-site residues include His-159 and Glu-161. The GMPS ATP-PPase domain occupies Trp-186 to Arg-376. Ser-213–Ser-219 serves as a coordination point for ATP.

In terms of assembly, homodimer.

It carries out the reaction XMP + L-glutamine + ATP + H2O = GMP + L-glutamate + AMP + diphosphate + 2 H(+). Its pathway is purine metabolism; GMP biosynthesis; GMP from XMP (L-Gln route): step 1/1. In terms of biological role, catalyzes the synthesis of GMP from XMP. This Thermotoga petrophila (strain ATCC BAA-488 / DSM 13995 / JCM 10881 / RKU-1) protein is GMP synthase [glutamine-hydrolyzing].